The following is a 116-amino-acid chain: Immunoglobulin heavy variable 3-13 (116 aa).

Positions M1 to C19 are cleaved as a signal peptide. The segment at E20–S44 is framework-1. The region spanning E20 to R116 is the Ig-like domain. C41 and C114 are oxidised to a cystine. The segment at G45 to D52 is complementarity-determining-1. The framework-2 stretch occupies residues M53–A69. The interval I70–P76 is complementarity-determining-2. The framework-3 stretch occupies residues Y77 to C114. A complementarity-determining-3 region spans residues A115–R116.

Immunoglobulins are composed of two identical heavy chains and two identical light chains; disulfide-linked.

It localises to the secreted. The protein resides in the cell membrane. Functionally, v region of the variable domain of immunoglobulin heavy chains that participates in the antigen recognition. Immunoglobulins, also known as antibodies, are membrane-bound or secreted glycoproteins produced by B lymphocytes. In the recognition phase of humoral immunity, the membrane-bound immunoglobulins serve as receptors which, upon binding of a specific antigen, trigger the clonal expansion and differentiation of B lymphocytes into immunoglobulins-secreting plasma cells. Secreted immunoglobulins mediate the effector phase of humoral immunity, which results in the elimination of bound antigens. The antigen binding site is formed by the variable domain of one heavy chain, together with that of its associated light chain. Thus, each immunoglobulin has two antigen binding sites with remarkable affinity for a particular antigen. The variable domains are assembled by a process called V-(D)-J rearrangement and can then be subjected to somatic hypermutations which, after exposure to antigen and selection, allow affinity maturation for a particular antigen. This is Immunoglobulin heavy variable 3-13 from Homo sapiens (Human).